A 369-amino-acid chain; its full sequence is Opsin Rh6 (369 aa).

Over 1–46 (MASLHPPSFAYMRDGRNLSLAESVPAEIMHMVDPYWYQWPPLEPMW) the chain is Extracellular. The N-linked (GlcNAc...) asparagine glycan is linked to Asn-17. A helical transmembrane segment spans residues 47–71 (FGIIGFVIAILGTMSLAGNFIVMYI). The Cytoplasmic portion of the chain corresponds to 72–83 (FTSSKGLRTPSN). The chain crosses the membrane as a helical span at residues 84–109 (MFVVNLAFSDFMMMFTMFPPVVLNGF). The Extracellular segment spans residues 110–123 (YGTWIMGPFLCELY). Cys-120 and Cys-197 form a disulfide bridge. The chain crosses the membrane as a helical span at residues 124-143 (GMFGSLFGCVSIWSMTLIAY). The Cytoplasmic segment spans residues 144-162 (DRYCVIVKGMARKPLTATA). Residues 163-186 (AVLRLMVVWTICGAWALMPLFGWN) form a helical membrane-spanning segment. The Extracellular segment spans residues 187–210 (RYVPEGNMTACGTDYFAKDWWNRS). 2 N-linked (GlcNAc...) asparagine glycosylation sites follow: Asn-193 and Asn-208. Residues 211–238 (YIIVYSLWVYLTPLLTIIFSYWHIMKAV) traverse the membrane as a helical segment. Residues 239 to 274 (AAHEKAMREQAKKMNVASLRNSEADKSKAIEIKLAK) are Cytoplasmic-facing. A helical membrane pass occupies residues 275-298 (VALTTISLWFFAWTPYTIINYAGI). At 299-305 (FESMHLS) the chain is on the extracellular side. A helical transmembrane segment spans residues 306 to 330 (PLSTICGSVFAKANAVCNPIVYGLS). Lys-317 carries the N6-(retinylidene)lysine modification. Residues 331 to 369 (HPKYKQVLREKMPCLACGKDDLTSDSRTQATAEISESQA) lie on the Cytoplasmic side of the membrane.

The protein belongs to the G-protein coupled receptor 1 family. Opsin subfamily. Phosphorylated on some or all of the serine and threonine residues present in the C-terminal region. As to expression, each Drosophila eye is composed of 800 facets or ommatidia. Each ommatidium contains 8 photoreceptor cells (R1-R8), the R1 to R6 cells are outer cells, while R7 and R8 are inner cells. Rh6 is expressed in a subset of R8 cells, most likely expressed in the subset of R8 cells paired with Rh4-expressing R7 cells (R7y).

Its subcellular location is the membrane. Its function is as follows. Visual pigments are the light-absorbing molecules that mediate vision. They consist of an apoprotein, opsin, covalently linked to cis-retinal. The chain is Opsin Rh6 (Rh6) from Drosophila melanogaster (Fruit fly).